The primary structure comprises 215 residues: Glutaredoxin 2 (215 aa).

The 77-residue stretch at 1–77 (MKLYIYDHCP…YVDKLDGKPL (77 aa)) folds into the GST N-terminal domain. A disulfide bond links cysteine 9 and cysteine 12.

This sequence belongs to the glutaredoxin family.

In terms of biological role, involved in reducing some disulfides in a coupled system with glutathione reductase. Does not act as hydrogen donor for ribonucleotide reductase. The polypeptide is Glutaredoxin 2 (grxB) (Escherichia coli O157:H7).